The chain runs to 933 residues: Isoleucine--tRNA ligase (933 aa).

The 'HIGH' region signature appears at 57-67 (PYANGNIHVGH). Residue E554 coordinates L-isoleucyl-5'-AMP. A 'KMSKS' region motif is present at residues 595–599 (KMSKS). K598 is a binding site for ATP.

It belongs to the class-I aminoacyl-tRNA synthetase family. IleS type 1 subfamily. As to quaternary structure, monomer.

Its subcellular location is the cytoplasm. The enzyme catalyses tRNA(Ile) + L-isoleucine + ATP = L-isoleucyl-tRNA(Ile) + AMP + diphosphate. Catalyzes the attachment of isoleucine to tRNA(Ile). As IleRS can inadvertently accommodate and process structurally similar amino acids such as valine, to avoid such errors it has two additional distinct tRNA(Ile)-dependent editing activities. One activity is designated as 'pretransfer' editing and involves the hydrolysis of activated Val-AMP. The other activity is designated 'posttransfer' editing and involves deacylation of mischarged Val-tRNA(Ile). The sequence is that of Isoleucine--tRNA ligase from Streptococcus pyogenes serotype M6 (strain ATCC BAA-946 / MGAS10394).